We begin with the raw amino-acid sequence, 1321 residues long: Bile salt export pump (1321 aa).

Over 1-62 (MSDSVILRSI…FSSSTDIWLM (62 aa)) the chain is Cytoplasmic. The interval 16 to 37 (ENDGFESDKSYNNDKKSRLQDE) is disordered. Over residues 21–37 (ESDKSYNNDKKSRLQDE) the composition is skewed to basic and acidic residues. Residues 62–385 (MFVGSLCAFL…ASPCLEAFAT (324 aa)) enclose the ABC transmembrane type-1 1 domain. A helical membrane pass occupies residues 63–83 (FVGSLCAFLHGIAQPGVLLIF). The Extracellular segment spans residues 84–147 (GTMTDVFIDY…MIKFASYYAG (64 aa)). Asn-109, Asn-116, Asn-122, and Asn-125 each carry an N-linked (GlcNAc...) asparagine glycan. The chain crosses the membrane as a helical span at residues 148-168 (IAVAVLITGYIQICFWVIAAA). Residues 169-215 (RQIQKMRKFYFRRIMRMEIGWFDCNSVGELNTRFSDDINKINDAIAD) lie on the Cytoplasmic side of the membrane. Residues 216–236 (QMALFIQRMTSTICGFLLGFF) traverse the membrane as a helical segment. Residues 237 to 240 (RGWK) lie on the Extracellular side of the membrane. A helical membrane pass occupies residues 241–261 (LTLVIISVSPLIGIGAATIGL). Residues 262 to 319 (SVSKFTDYELKAYAKAGVVADEVISSMRTVAAFGGEKREVERYEKNLVFAQRWGIRKG) lie on the Cytoplasmic side of the membrane. Residues 320–340 (IVMGFFTGFVWCLIFLCYALA) form a helical membrane-spanning segment. Residues 341-353 (FWYGSTLVLDEGE) are Extracellular-facing. Residues 354–374 (YTPGTLVQIFLSVIVGALNLG) form a helical membrane-spanning segment. Topologically, residues 375-755 (NASPCLEAFA…KFSAPEWPYM (381 aa)) are cytoplasmic. The ABC transporter 1 domain maps to 420–656 (IEFHNVTFHY…KGVYFTLVTL (237 aa)). ATP is bound at residue 455–462 (GPSGAGKS). Thr-586 is modified (phosphothreonine). Ser-587 carries the post-translational modification Phosphoserine. The tract at residues 651 to 672 (FTLVTLQSQGNQALNEEDIKDA) is interaction with HAX1. Residues Ser-690, Ser-701, and Ser-704 each carry the phosphoserine modification. The ABC transmembrane type-1 2 domain maps to 755 to 1043 (MLVGSVGAAV…AFSYTPSYAK (289 aa)). A helical transmembrane segment spans residues 756–776 (LVGSVGAAVNGTVTPLYAFLF). Over 777-794 (SQILGTFSIPDKEEQRSQ) the chain is Extracellular. A helical membrane pass occupies residues 795–815 (INGVCLLFVAMGCVSLFTQFL). The Cytoplasmic portion of the chain corresponds to 816–869 (QGYAFAKSGELLTKRLRKFGFRAMLGQDIAWFDDLRNSPGALTTRLATDASQVQ). The next 2 helical transmembrane spans lie at 870–890 (GAAG…TVAM) and 891–911 (IIAF…FPFL). Residues 912 to 979 (ALSGATQTRM…PFKTAIQKAN (68 aa)) lie on the Cytoplasmic side of the membrane. The chain crosses the membrane as a helical span at residues 980 to 1000 (IYGFCFAFAQCIMFIANSASY). Topologically, residues 1001–1011 (RYGGYLISNEG) are extracellular. A helical membrane pass occupies residues 1012–1032 (LHFSYVFRVISAVVLSATALG). Topologically, residues 1033–1321 (RAFSYTPSYA…KLVTTGSPIS (289 aa)) are cytoplasmic. Residues 1078-1316 (IDFVDCKFTY…KGAYYKLVTT (239 aa)) form the ABC transporter 2 domain. An ATP-binding site is contributed by 1113 to 1120 (GSSGCGKS). Ser-1214 is subject to Phosphoserine. The mediates internalization from the plasma membrane stretch occupies residues 1311 to 1314 (YKLV). Ser-1321 carries the phosphoserine modification.

Belongs to the ABC transporter superfamily. ABCB family. Multidrug resistance exporter (TC 3.A.1.201) subfamily. In terms of assembly, interacts with HAX1. Interacts with the adapter protein complex 2 (AP-2) throught AP2A2 or AP2A1; this interaction regulates cell membrane expression of ABCB11 through its internalization in a clathrin-dependent manner and its subsequent degradation. N-glycosylated. Post-translationally, ubiquitinated; short-chain ubiquitination regulates cell-Surface expression of ABCB11. Expressed predominantly, if not exclusively in the liver, where it was further localized to the canalicular microvilli and to subcanalicular vesicles of the hepatocytes by in situ.

The protein resides in the apical cell membrane. It is found in the recycling endosome membrane. Its subcellular location is the endosome. It localises to the cell membrane. It catalyses the reaction cholate(in) + ATP + H2O = cholate(out) + ADP + phosphate + H(+). The catalysed reaction is taurocholate(in) + ATP + H2O = taurocholate(out) + ADP + phosphate + H(+). It carries out the reaction glycocholate(in) + ATP + H2O = glycocholate(out) + ADP + phosphate + H(+). The enzyme catalyses glycochenodeoxycholate(in) + ATP + H2O = glycochenodeoxycholate(out) + ADP + phosphate + H(+). It catalyses the reaction taurochenodeoxycholate(in) + ATP + H2O = taurochenodeoxycholate(out) + ADP + phosphate + H(+). The catalysed reaction is glycoursodeoxycholate(in) + ATP + H2O = glycoursodeoxycholate(out) + ADP + phosphate + H(+). It carries out the reaction tauroursodeoxycholate(in) + ATP + H2O = tauroursodeoxycholate(out) + ADP + phosphate + H(+). The enzyme catalyses taurodeoxycholate(in) + ATP + H2O = taurodeoxycholate(out) + ADP + phosphate + H(+). It catalyses the reaction taurolithocholate 3-sulfate(in) + ATP + H2O = taurolithocholate 3-sulfate(out) + ADP + phosphate + H(+). The catalysed reaction is pravastatin(in) + ATP + H2O = pravastatin(out) + ADP + phosphate + H(+). Its activity is regulated as follows. The uptake of taurocholate is inhibited by taurolithocholate sulfate with an IC(50) of 9 uM. Pravastatin competitively inhibits the transport of taurocholic acid. Cyclosporin A, glibenclamide, rifampicin and troglitazonestrongly competitively inhibit the transport activity of taurocholate. The canalicular transport activity of taurocholate is strongly dependent on canalicular membrane cholesterol content. The uptake of taurocholate is increased by short- and medium-chain fatty acids. Cholesterol increases transport capacity of taurocholate without affecting the affinity for the substrate. Catalyzes the transport of the major hydrophobic bile salts, such as taurine and glycine-conjugated cholic acid across the canalicular membrane of hepatocytes in an ATP-dependent manner, therefore participates in hepatic bile acid homeostasis and consequently to lipid homeostasis through regulation of biliary lipid secretion in a bile salts dependent manner. Transports taurine-conjugated bile salts more rapidly than glycine-conjugated bile salts. Also transports non-bile acid compounds, such as pravastatin and fexofenadine in an ATP-dependent manner and may be involved in their biliary excretion. This is Bile salt export pump from Homo sapiens (Human).